The chain runs to 263 residues: Probable methylthioribulose-1-phosphate dehydratase (263 aa).

Cys102 contributes to the substrate binding site. Residues His120 and His122 each contribute to the Zn(2+) site. Glu144 acts as the Proton donor/acceptor in catalysis. Residue His200 coordinates Zn(2+).

This sequence belongs to the aldolase class II family. MtnB subfamily. It depends on Zn(2+) as a cofactor.

The protein resides in the cytoplasm. It carries out the reaction 5-(methylsulfanyl)-D-ribulose 1-phosphate = 5-methylsulfanyl-2,3-dioxopentyl phosphate + H2O. It participates in amino-acid biosynthesis; L-methionine biosynthesis via salvage pathway; L-methionine from S-methyl-5-thio-alpha-D-ribose 1-phosphate: step 2/6. Functionally, catalyzes the dehydration of methylthioribulose-1-phosphate (MTRu-1-P) into 2,3-diketo-5-methylthiopentyl-1-phosphate (DK-MTP-1-P). This is Probable methylthioribulose-1-phosphate dehydratase from Caenorhabditis elegans.